We begin with the raw amino-acid sequence, 189 residues long: Thermostable direct hemolysin 1 (189 aa).

An N-terminal signal peptide occupies residues 1–24 (MKHQYFAKKSFLFISMLAAFKTSA). A disulfide bridge connects residues Cys175 and Cys185.

It belongs to the TDH hemolysin family. Homodimer.

In terms of biological role, bacterial hemolysins are exotoxins that attack blood cell membranes and cause cell rupture by mechanisms not clearly defined. In Vibrio parahaemolyticus serotype O3:K6 (strain RIMD 2210633), this protein is Thermostable direct hemolysin 1 (tdh1).